Reading from the N-terminus, the 259-residue chain is Thiamine thiazole synthase (259 aa).

NAD(+) is bound by residues alanine 33, 52 to 53 (ER), glycine 60, valine 124, and 152 to 154 (HVD). Aspartate 154 and histidine 169 together coordinate Fe cation. Methionine 219 lines the NAD(+) pocket. Arginine 229 is a binding site for glycine.

Belongs to the THI4 family. As to quaternary structure, homooctamer; tetramer of dimers. Fe(2+) serves as cofactor.

The enzyme catalyses hydrogen sulfide + glycine + NAD(+) = ADP-5-ethyl-4-methylthiazole-2-carboxylate + nicotinamide + 3 H2O + H(+). The protein operates within cofactor biosynthesis; thiamine diphosphate biosynthesis. Its function is as follows. Involved in the biosynthesis of the thiazole moiety of thiamine. Catalyzes the conversion of NAD and glycine to adenosine diphosphate 5-(2-hydroxyethyl)-4-methylthiazole-2-carboxylate (ADT), an adenylated thiazole intermediate, using free sulfide as a source of sulfur. The protein is Thiamine thiazole synthase of Pyrobaculum neutrophilum (strain DSM 2338 / JCM 9278 / NBRC 100436 / V24Sta) (Thermoproteus neutrophilus).